We begin with the raw amino-acid sequence, 366 residues long: tRNA/tmRNA (uracil-C(5))-methyltransferase (366 aa).

Residues glutamine 190, tyrosine 218, asparagine 223, glutamate 239, and aspartate 299 each coordinate S-adenosyl-L-methionine. Cysteine 324 serves as the catalytic Nucleophile. Catalysis depends on glutamate 358, which acts as the Proton acceptor.

This sequence belongs to the class I-like SAM-binding methyltransferase superfamily. RNA M5U methyltransferase family. TrmA subfamily.

The enzyme catalyses uridine(54) in tRNA + S-adenosyl-L-methionine = 5-methyluridine(54) in tRNA + S-adenosyl-L-homocysteine + H(+). The catalysed reaction is uridine(341) in tmRNA + S-adenosyl-L-methionine = 5-methyluridine(341) in tmRNA + S-adenosyl-L-homocysteine + H(+). Its function is as follows. Dual-specificity methyltransferase that catalyzes the formation of 5-methyluridine at position 54 (m5U54) in all tRNAs, and that of position 341 (m5U341) in tmRNA (transfer-mRNA). The sequence is that of tRNA/tmRNA (uracil-C(5))-methyltransferase from Klebsiella pneumoniae subsp. pneumoniae (strain ATCC 700721 / MGH 78578).